A 410-amino-acid polypeptide reads, in one-letter code: MKHPIHVTSEIGELQTVLLKRPGKEVENLTPDYLQQLLFDDIPYLPIIQKEHDYFAQTLRNRGVEVLYLEKLAAEALVDKKLREEFVDRILKEGQADVNVAHQTLKEYLLSFSNEELIQKIMGGVRKNEIETSKKTHLYELMEDHYPFYLDPMPNLYFTRDPAASVGDGLTINKMREPARRRESLFMEYIIKYHPRFAKHNVPIWLDRDYKFPIEGGDELILNEETIAIGVSARTSAKAIERLAKNLFSRQNKIKKVLAIEIPKCRAFMHLDTVFTMVDYDKFTIHPAIQGPKGNMNIYILEKGSDEETLKITHRTSLMEALKEVLGLSELVLIPCGGGDVIASAREQWNDGSNTLAIAPGVVVTYDRNYVSNTLLREHGIEVIEVLSSELSRGRGGPRCMSMPIVRKDI.

The active-site Amidino-cysteine intermediate is the Cys-400.

Belongs to the arginine deiminase family.

It is found in the cytoplasm. The catalysed reaction is L-arginine + H2O = L-citrulline + NH4(+). The protein operates within amino-acid degradation; L-arginine degradation via ADI pathway; carbamoyl phosphate from L-arginine: step 1/2. The polypeptide is Arginine deiminase (Bacillus cereus (strain G9842)).